The primary structure comprises 231 residues: Floral homeotic protein PMADS 1 (231 aa).

Residues 3–58 (RGKIQIKRIENQTNRQVTYSKRRNGLFKKANELTVLCDAKVSIIMISSTGKLHEFI) form the MADS-box domain. Residues 84–174 (YEKMQEQLRK…LLEFDARQED (91 aa)) enclose the K-box domain.

In terms of tissue distribution, predominantly expressed in petals and stamens, less in carpels and sepals.

The protein resides in the nucleus. Transcription factor involved in the genetic control of flower development. Necessary for the normal development of petals. Absence of the PMADS1 protein causes transformation of petals into sepals. In Petunia hybrida (Petunia), this protein is Floral homeotic protein PMADS 1 (PMADS1).